Reading from the N-terminus, the 399-residue chain is Flavohemoprotein (399 aa).

Residues 1–138 enclose the Globin domain; sequence MLDNKTIEII…IADAFIGIEK (138 aa). Residue His-85 participates in heme b binding. Active-site charge relay system residues include Tyr-95 and Glu-137. A reductase region spans residues 149 to 399; sequence GGWKEYKPFV…GPQLSLAQSV (251 aa). Residues 152-255 enclose the FAD-binding FR-type domain; that stretch reads KEYKPFVIAK…SAPAGDFVLD (104 aa). FAD-binding positions include Tyr-190 and 206-209; that span reads RQYS. Residue 268–273 coordinates NADP(+); that stretch reads GVGITP. 388–391 is an FAD binding site; sequence LFGP.

Belongs to the globin family. Two-domain flavohemoproteins subfamily. This sequence in the C-terminal section; belongs to the flavoprotein pyridine nucleotide cytochrome reductase family. The cofactor is heme b. It depends on FAD as a cofactor.

The catalysed reaction is 2 nitric oxide + NADPH + 2 O2 = 2 nitrate + NADP(+) + H(+). It carries out the reaction 2 nitric oxide + NADH + 2 O2 = 2 nitrate + NAD(+) + H(+). Is involved in NO detoxification in an aerobic process, termed nitric oxide dioxygenase (NOD) reaction that utilizes O(2) and NAD(P)H to convert NO to nitrate, which protects the bacterium from various noxious nitrogen compounds. Therefore, plays a central role in the inducible response to nitrosative stress. The sequence is that of Flavohemoprotein (hmp) from Bacillus subtilis (strain 168).